A 921-amino-acid polypeptide reads, in one-letter code: Valine--tRNA ligase (921 aa).

The short motif at 40 to 50 (PNVTGSLHMGH) is the 'HIGH' region element. Residues 522-526 (KMSKS) carry the 'KMSKS' region motif. Position 525 (Lys-525) interacts with ATP. Residues 849-921 (MADLIDKEAE…LQHKNRIESL (73 aa)) are a coiled coil.

Belongs to the class-I aminoacyl-tRNA synthetase family. ValS type 1 subfamily. In terms of assembly, monomer.

The protein resides in the cytoplasm. It carries out the reaction tRNA(Val) + L-valine + ATP = L-valyl-tRNA(Val) + AMP + diphosphate. In terms of biological role, catalyzes the attachment of valine to tRNA(Val). As ValRS can inadvertently accommodate and process structurally similar amino acids such as threonine, to avoid such errors, it has a 'posttransfer' editing activity that hydrolyzes mischarged Thr-tRNA(Val) in a tRNA-dependent manner. This Legionella pneumophila (strain Lens) protein is Valine--tRNA ligase.